A 233-amino-acid chain; its full sequence is Phosphatidylserine decarboxylase proenzyme (233 aa).

Serine 190 (schiff-base intermediate with substrate; via pyruvic acid) is an active-site residue. Position 190 is a pyruvic acid (Ser); by autocatalysis (serine 190).

Belongs to the phosphatidylserine decarboxylase family. PSD-A subfamily. In terms of assembly, heterodimer of a large membrane-associated beta subunit and a small pyruvoyl-containing alpha subunit. Pyruvate serves as cofactor. Post-translationally, is synthesized initially as an inactive proenzyme. Formation of the active enzyme involves a self-maturation process in which the active site pyruvoyl group is generated from an internal serine residue via an autocatalytic post-translational modification. Two non-identical subunits are generated from the proenzyme in this reaction, and the pyruvate is formed at the N-terminus of the alpha chain, which is derived from the carboxyl end of the proenzyme. The post-translation cleavage follows an unusual pathway, termed non-hydrolytic serinolysis, in which the side chain hydroxyl group of the serine supplies its oxygen atom to form the C-terminus of the beta chain, while the remainder of the serine residue undergoes an oxidative deamination to produce ammonia and the pyruvoyl prosthetic group on the alpha chain.

Its subcellular location is the cell membrane. It catalyses the reaction a 1,2-diacyl-sn-glycero-3-phospho-L-serine + H(+) = a 1,2-diacyl-sn-glycero-3-phosphoethanolamine + CO2. It participates in phospholipid metabolism; phosphatidylethanolamine biosynthesis; phosphatidylethanolamine from CDP-diacylglycerol: step 2/2. Its function is as follows. Catalyzes the formation of phosphatidylethanolamine (PtdEtn) from phosphatidylserine (PtdSer). The polypeptide is Phosphatidylserine decarboxylase proenzyme (Azorhizobium caulinodans (strain ATCC 43989 / DSM 5975 / JCM 20966 / LMG 6465 / NBRC 14845 / NCIMB 13405 / ORS 571)).